A 188-amino-acid polypeptide reads, in one-letter code: 2-amino-4-hydroxy-6-hydroxymethyldihydropteridine pyrophosphokinase (188 aa).

Belongs to the HPPK family.

It catalyses the reaction 6-hydroxymethyl-7,8-dihydropterin + ATP = (7,8-dihydropterin-6-yl)methyl diphosphate + AMP + H(+). Its pathway is cofactor biosynthesis; tetrahydrofolate biosynthesis; 2-amino-4-hydroxy-6-hydroxymethyl-7,8-dihydropteridine diphosphate from 7,8-dihydroneopterin triphosphate: step 4/4. In terms of biological role, catalyzes the transfer of pyrophosphate from adenosine triphosphate (ATP) to 6-hydroxymethyl-7,8-dihydropterin, an enzymatic step in folate biosynthesis pathway. In Mycobacterium tuberculosis (strain ATCC 25618 / H37Rv), this protein is 2-amino-4-hydroxy-6-hydroxymethyldihydropteridine pyrophosphokinase (folK).